A 347-amino-acid polypeptide reads, in one-letter code: NADH-ubiquinone oxidoreductase chain 2 (347 aa).

10 helical membrane passes run 3 to 23, 25 to 45, 59 to 79, 93 to 115, 149 to 169, 178 to 198, 200 to 220, 242 to 262, 274 to 294, and 323 to 343; these read PPIL…VLTS, HWLL…PILM, YFLT…INLL, MAST…HFWV, INTN…GWGG, ILAY…TYNP, VMIL…MLFI, SFIL…GFIP, EMII…YFYM, and MALL…TPMM.

It belongs to the complex I subunit 2 family. In terms of assembly, core subunit of respiratory chain NADH dehydrogenase (Complex I) which is composed of 45 different subunits. Interacts with TMEM242.

It is found in the mitochondrion inner membrane. The catalysed reaction is a ubiquinone + NADH + 5 H(+)(in) = a ubiquinol + NAD(+) + 4 H(+)(out). In terms of biological role, core subunit of the mitochondrial membrane respiratory chain NADH dehydrogenase (Complex I) which catalyzes electron transfer from NADH through the respiratory chain, using ubiquinone as an electron acceptor. Essential for the catalytic activity and assembly of complex I. The chain is NADH-ubiquinone oxidoreductase chain 2 from Nandinia binotata (African palm civet).